The following is an 874-amino-acid chain: Alanine--tRNA ligase (874 aa).

Zn(2+) contacts are provided by H563, H567, C665, and H669.

It belongs to the class-II aminoacyl-tRNA synthetase family. Zn(2+) is required as a cofactor.

Its subcellular location is the cytoplasm. It catalyses the reaction tRNA(Ala) + L-alanine + ATP = L-alanyl-tRNA(Ala) + AMP + diphosphate. Catalyzes the attachment of alanine to tRNA(Ala) in a two-step reaction: alanine is first activated by ATP to form Ala-AMP and then transferred to the acceptor end of tRNA(Ala). Also edits incorrectly charged Ser-tRNA(Ala) and Gly-tRNA(Ala) via its editing domain. The protein is Alanine--tRNA ligase of Haemophilus influenzae (strain ATCC 51907 / DSM 11121 / KW20 / Rd).